The primary structure comprises 62 residues: Protein CYSTEINE-RICH TRANSMEMBRANE MODULE 2 (62 aa).

Transmembrane regions (helical) follow at residues 23-39 (VAVA…AAFD) and 33-53 (VVAA…LSLI).

The protein belongs to the CYSTM1 family. In terms of assembly, heterodimers. Binds weakly to CYSTM7 and WIH1/CYSTM13. Mostly expressed in stems, siliques, leaves and flowers and, to a lower extent, in roots.

Its subcellular location is the cell membrane. It localises to the nucleus. The protein resides in the secreted. It is found in the cell wall. In terms of biological role, involved in resistance to abiotic stress. Confers resistance to heavy metal ions (e.g. cadmium (CdCl(2)) and copper (CuCl(2))) by chelating them at the plasma membrane of root cells, thus stopping their entry and reducing their accumulation. In Arabidopsis thaliana (Mouse-ear cress), this protein is Protein CYSTEINE-RICH TRANSMEMBRANE MODULE 2.